The chain runs to 102 residues: Small ribosomal subunit protein uS10 (102 aa).

It belongs to the universal ribosomal protein uS10 family. Part of the 30S ribosomal subunit.

In terms of biological role, involved in the binding of tRNA to the ribosomes. The protein is Small ribosomal subunit protein uS10 of Sulfurihydrogenibium sp. (strain YO3AOP1).